A 106-amino-acid chain; its full sequence is Nucleoid-associated protein BRADO0764 (106 aa).

This sequence belongs to the YbaB/EbfC family. As to quaternary structure, homodimer.

The protein localises to the cytoplasm. Its subcellular location is the nucleoid. Binds to DNA and alters its conformation. May be involved in regulation of gene expression, nucleoid organization and DNA protection. The protein is Nucleoid-associated protein BRADO0764 of Bradyrhizobium sp. (strain ORS 278).